Consider the following 436-residue polypeptide: Enolase (436 aa).

Glutamine 163 contacts (2R)-2-phosphoglycerate. Glutamate 205 functions as the Proton donor in the catalytic mechanism. The Mg(2+) site is built by aspartate 242, glutamate 285, and aspartate 312. (2R)-2-phosphoglycerate contacts are provided by lysine 337, arginine 366, serine 367, and lysine 388. Catalysis depends on lysine 337, which acts as the Proton acceptor.

The protein belongs to the enolase family. Mg(2+) serves as cofactor.

The protein localises to the cytoplasm. Its subcellular location is the secreted. The protein resides in the cell surface. It carries out the reaction (2R)-2-phosphoglycerate = phosphoenolpyruvate + H2O. The protein operates within carbohydrate degradation; glycolysis; pyruvate from D-glyceraldehyde 3-phosphate: step 4/5. Catalyzes the reversible conversion of 2-phosphoglycerate (2-PG) into phosphoenolpyruvate (PEP). It is essential for the degradation of carbohydrates via glycolysis. This Solidesulfovibrio magneticus (strain ATCC 700980 / DSM 13731 / RS-1) (Desulfovibrio magneticus) protein is Enolase.